Reading from the N-terminus, the 382-residue chain is 1-deoxy-D-xylulose 5-phosphate reductoisomerase (382 aa).

Threonine 10, glycine 11, serine 12, isoleucine 13, asparagine 38, and asparagine 120 together coordinate NADPH. Lysine 121 contributes to the 1-deoxy-D-xylulose 5-phosphate binding site. An NADPH-binding site is contributed by glutamate 122. Residue aspartate 146 participates in Mn(2+) binding. 1-deoxy-D-xylulose 5-phosphate-binding residues include serine 147, glutamate 148, serine 172, and histidine 195. A Mn(2+)-binding site is contributed by glutamate 148. Glycine 201 contacts NADPH. Residues serine 208, asparagine 213, lysine 214, and glutamate 217 each coordinate 1-deoxy-D-xylulose 5-phosphate. Residue glutamate 217 coordinates Mn(2+).

The protein belongs to the DXR family. Mg(2+) serves as cofactor. Mn(2+) is required as a cofactor.

It carries out the reaction 2-C-methyl-D-erythritol 4-phosphate + NADP(+) = 1-deoxy-D-xylulose 5-phosphate + NADPH + H(+). It participates in isoprenoid biosynthesis; isopentenyl diphosphate biosynthesis via DXP pathway; isopentenyl diphosphate from 1-deoxy-D-xylulose 5-phosphate: step 1/6. Its function is as follows. Catalyzes the NADPH-dependent rearrangement and reduction of 1-deoxy-D-xylulose-5-phosphate (DXP) to 2-C-methyl-D-erythritol 4-phosphate (MEP). In Caldanaerobacter subterraneus subsp. tengcongensis (strain DSM 15242 / JCM 11007 / NBRC 100824 / MB4) (Thermoanaerobacter tengcongensis), this protein is 1-deoxy-D-xylulose 5-phosphate reductoisomerase.